Reading from the N-terminus, the 150-residue chain is MNKTITPSIDSINRQWYLVDAENQTLGRLATEVASVLRGKNKPSFTPHLDTGDFVIIVNAEKIKVTGKKGMQKLYRRHSGRPGGMKVETFNSLQERIPERIVEKAIKGMLPHNALGRQLFRKLKVYKGSEHPHSAQNPQVLSITTNELVK.

Residues 130 to 150 form a disordered region; that stretch reads EHPHSAQNPQVLSITTNELVK. A compositionally biased stretch (polar residues) spans 134–150; that stretch reads SAQNPQVLSITTNELVK.

The protein belongs to the universal ribosomal protein uL13 family. As to quaternary structure, part of the 50S ribosomal subunit.

Functionally, this protein is one of the early assembly proteins of the 50S ribosomal subunit, although it is not seen to bind rRNA by itself. It is important during the early stages of 50S assembly. The polypeptide is Large ribosomal subunit protein uL13 (Prochlorococcus marinus (strain SARG / CCMP1375 / SS120)).